We begin with the raw amino-acid sequence, 497 residues long: MSDIIKLTAAEIAAKIASGELTAVQVTEAHLARIEAVDEKVHAFLHVDREGALAQARAVDEKRERGEKLGPLAGVPLALKDIFTTEGIPTTVGSKILEGWIPPYDATVTKRLKAADVVILGKTNMDEFAMGSSTENSAYGPTGNPWDLTKIPGGSGGGSSAALAAFQAPLAIGTDTGGSIRQPASVTGTVGVKPTYGGVSRYGMVAFSSSLDQGGPCARTVLDAALLHEVIAGHDPMDSTSIDAPVPAVVEAARNGSVDGMRVGVVKQFRGEGYQAGVVQRFDESVELLKSLGAEIVELDCPSFDLALSAYYLIAPSECSSNLARFDGLRYGARVGDDGTHSAEEVTSLTREAGFGPEVKRRIMLGTYALSSGYYDAYYGSAQKVRTLIKQEFERAFEQVDVIVSPTTPTTAFAIGERADDPMAMYLADLCTIPTNLAGNAAMSLPCGLAPEDNLPVGLQIIAPAMKDDRLYKVGAAVEAAFVEKWGHPLIEEAPSL.

Catalysis depends on charge relay system residues Lys80 and Ser155. Ser179 serves as the catalytic Acyl-ester intermediate.

This sequence belongs to the amidase family. GatA subfamily. Heterotrimer of A, B and C subunits.

The catalysed reaction is L-glutamyl-tRNA(Gln) + L-glutamine + ATP + H2O = L-glutaminyl-tRNA(Gln) + L-glutamate + ADP + phosphate + H(+). Its function is as follows. Allows the formation of correctly charged Gln-tRNA(Gln) through the transamidation of misacylated Glu-tRNA(Gln) in organisms which lack glutaminyl-tRNA synthetase. The reaction takes place in the presence of glutamine and ATP through an activated gamma-phospho-Glu-tRNA(Gln). The sequence is that of Glutamyl-tRNA(Gln) amidotransferase subunit A (gatA) from Streptomyces coelicolor (strain ATCC BAA-471 / A3(2) / M145).